Here is a 355-residue protein sequence, read N- to C-terminus: Heavy metal-associated isoprenylated plant protein 7 (355 aa).

Basic and acidic residues predominate over residues 1–58; the sequence is MGEEEKKPEAAEEKKMEEKKPEEKKEGEDKKVDAEKKGEDSDKKPQEGESNKDSKEDS. The segment at 1–74 is disordered; sequence MGEEEKKPEA…APAPPPPPQE (74 aa). A compositionally biased stretch (pro residues) spans 63–73; the sequence is PEAPAPPPPPQ. HMA domains are found at residues 72 to 136 and 170 to 234; these read PQEV…HRQV and VVTV…KHAA. Cysteine 83 and cysteine 86 together coordinate a metal cation. The segment at 132–157 is disordered; sequence THRQVQLLSPIPPPPPPPEKKAEEDK. 2 residues coordinate a metal cation: cysteine 181 and cysteine 184. The disordered stretch occupies residues 235 to 308; the sequence is IMKIDPPPPP…GGGEEEGKVV (74 aa). Residues 254 to 293 show a composition bias toward basic and acidic residues; sequence EGEKKEEEKGEGESKGEEGKDDKAKTDEEKKEGDGGKGEG. The residue at position 352 (cysteine 352) is a Cysteine methyl ester. Cysteine 352 is lipidated: S-farnesyl cysteine. Residues 353–355 constitute a propeptide, removed in mature form; sequence TVM.

The protein belongs to the HIPP family. In terms of processing, efficiently farnesylated in vitro.

Its function is as follows. Heavy-metal-binding protein. Binds zinc, copper and nickel in a reversible manner. This chain is Heavy metal-associated isoprenylated plant protein 7, found in Arabidopsis thaliana (Mouse-ear cress).